A 66-amino-acid chain; its full sequence is MAKGKDVRVTIILECTSCVRNDIKKESAGISRYITQKNRHNTPSRLELRKFCPYCYKHTIHGEIKK.

Belongs to the bacterial ribosomal protein bL33 family.

Its subcellular location is the plastid. It is found in the chloroplast. This Crucihimalaya wallichii (Rock-cress) protein is Large ribosomal subunit protein bL33c.